An 800-amino-acid polypeptide reads, in one-letter code: Protocadherin beta-10 (800 aa).

The N-terminal stretch at 1–26 (MAVRELCFPRQRQVLFLFLFWGVSLA) is a signal peptide. Residues 27–692 (GSGFGRYSVT…AEADLLTVYL (666 aa)) lie on the Extracellular side of the membrane. Cadherin domains follow at residues 35–133 (VTEE…APVF), 138–242 (TVLK…APQF), 247–347 (YETQ…PPEL), 352–451 (FSNS…APAF), and 456–561 (YTLF…SPFV). N169 and N181 each carry an N-linked (GlcNAc...) asparagine glycan. N-linked (GlcNAc...) asparagine glycans are attached at residues N418 and N436. A glycan (N-linked (GlcNAc...) asparagine) is linked at N567. A Cadherin 6 domain is found at 568–671 (GSAPCTELVP…LVDGFSQPYL (104 aa)). The chain crosses the membrane as a helical span at residues 693–713 (VVALASVSSLFLLSVLLFVAV). The Cytoplasmic segment spans residues 714-800 (RLCRRSRAAS…FRNSFGFNIQ (87 aa)).

Its subcellular location is the cell membrane. In terms of biological role, potential calcium-dependent cell-adhesion protein. May be involved in the establishment and maintenance of specific neuronal connections in the brain. The polypeptide is Protocadherin beta-10 (PCDHB10) (Homo sapiens (Human)).